The chain runs to 209 residues: Ribosomal RNA large subunit methyltransferase E (209 aa).

S-adenosyl-L-methionine contacts are provided by Gly63, Trp65, Asp83, Asp99, and Asp124. The Proton acceptor role is filled by Lys164.

It belongs to the class I-like SAM-binding methyltransferase superfamily. RNA methyltransferase RlmE family.

It localises to the cytoplasm. It catalyses the reaction uridine(2552) in 23S rRNA + S-adenosyl-L-methionine = 2'-O-methyluridine(2552) in 23S rRNA + S-adenosyl-L-homocysteine + H(+). Functionally, specifically methylates the uridine in position 2552 of 23S rRNA at the 2'-O position of the ribose in the fully assembled 50S ribosomal subunit. This Shigella dysenteriae serotype 1 (strain Sd197) protein is Ribosomal RNA large subunit methyltransferase E.